A 541-amino-acid chain; its full sequence is Chaperonin GroEL (541 aa).

ATP contacts are provided by residues 29–32 (TIGP), 86–90 (DGTTT), glycine 413, and aspartate 494.

This sequence belongs to the chaperonin (HSP60) family. As to quaternary structure, forms a cylinder of 14 subunits composed of two heptameric rings stacked back-to-back. Interacts with the co-chaperonin GroES.

Its subcellular location is the cytoplasm. It catalyses the reaction ATP + H2O + a folded polypeptide = ADP + phosphate + an unfolded polypeptide.. Together with its co-chaperonin GroES, plays an essential role in assisting protein folding. The GroEL-GroES system forms a nano-cage that allows encapsulation of the non-native substrate proteins and provides a physical environment optimized to promote and accelerate protein folding. The polypeptide is Chaperonin GroEL (Lachnospira eligens (strain ATCC 27750 / DSM 3376 / VPI C15-48 / C15-B4) (Eubacterium eligens)).